The sequence spans 137 residues: Large ribosomal subunit protein uL16 (137 aa).

The protein belongs to the universal ribosomal protein uL16 family. In terms of assembly, part of the 50S ribosomal subunit.

Binds 23S rRNA and is also seen to make contacts with the A and possibly P site tRNAs. This chain is Large ribosomal subunit protein uL16, found in Bartonella henselae (strain ATCC 49882 / DSM 28221 / CCUG 30454 / Houston 1) (Rochalimaea henselae).